The following is a 96-amino-acid chain: Protein RnfH (96 aa).

It belongs to the UPF0125 (RnfH) family.

This chain is Protein RnfH, found in Klebsiella pneumoniae (strain 342).